A 510-amino-acid polypeptide reads, in one-letter code: Chromosomal replication initiator protein DnaA (510 aa).

The segment at 1 to 107 is domain I, interacts with DnaA modulators; that stretch reads MTNDPGSGFA…VRIAPPPADD (107 aa). The interval 107–169 is domain II; it reads DDDDSVAAAV…ADTSASAGGT (63 aa). Residues 119–168 are disordered; that stretch reads PGLEASPETSQEVSDEIDDFGENAPNSRQSWPTHFKKRSTDADTSASAGG. The segment at 170-386 is domain III, AAA+ region; the sequence is SLNRRYTFDT…GALIRVTAFA (217 aa). Residues Gly-214, Gly-216, Lys-217, and Thr-218 each contribute to the ATP site. The tract at residues 387–510 is domain IV, binds dsDNA; it reads SLNKTPIDKA…TTRIRQRSKR (124 aa).

Belongs to the DnaA family. Oligomerizes as a right-handed, spiral filament on DNA at oriC.

It localises to the cytoplasm. Its function is as follows. Plays an essential role in the initiation and regulation of chromosomal replication. ATP-DnaA binds to the origin of replication (oriC) to initiate formation of the DNA replication initiation complex once per cell cycle. Binds the DnaA box (a 9 base pair repeat at the origin) and separates the double-stranded (ds)DNA. Forms a right-handed helical filament on oriC DNA; dsDNA binds to the exterior of the filament while single-stranded (ss)DNA is stabiized in the filament's interior. The ATP-DnaA-oriC complex binds and stabilizes one strand of the AT-rich DNA unwinding element (DUE), permitting loading of DNA polymerase. After initiation quickly degrades to an ADP-DnaA complex that is not apt for DNA replication. Binds acidic phospholipids. The protein is Chromosomal replication initiator protein DnaA of Mycobacterium marinum (strain ATCC BAA-535 / M).